A 222-amino-acid chain; its full sequence is uncharacterized protein (222 aa).

The protein belongs to the ycf73 family.

The protein localises to the plastid. It is found in the chloroplast. This is an uncharacterized protein from Oryza nivara (Indian wild rice).